The following is a 954-amino-acid chain: MAGNKDSSWDDIKNEGIDLEKIPIEEVLTQLRCTREGLTSDEGQTRLEIFGPNKLEEKKENKVLKFLGFMWNPLSWVMELAAIMAIALANGGGRPPDWQDFVGITVLLIINSTISFIEENNAGNAAAALMAGLAPKTKVLRDGKWSEQEAAILVPGDIISIKLGDIVPADGRLLDGDPLKIDQSALTGESLPVTKHPGQEVYSGSTCKQGELEAVVIATGVHTFFGKAAHLVDSTNQEGHFQKVLTAIGNFCICSIAIGMLIEIVVMYPIQKRAYRDGIDNLLVLLIGGIPIAMPTVLSVTMAIGSHRLSQQGAITKRMTAIEEMAGMDVLCSDKTGTLTLNKLTVDKSMVEVFVKDLDKDQLLVNAARASRVENQDAIDACIVGMLGDPREAREGITEVHFFPFNPVDKRTAITYIDANGNWHRVSKGAPEQIIELCNLREDASKRAHDIIDKFADRGLRSLAVGRQTVSEKDKNSPGEPWQFLGLLPLFDPPRHDSAETIRRALDLGVNVKMITGDQLAIGKETGRRLGMGTNMYPSSALLGQDKDESIASLPVDELIEKADGFAGVFPEHKYEIVKRLQEMKHICGMTGDGVNDAPALKRADIGIAVADATDAARSASDIVLTEPGLSVIVSAVLTSRAIFQRMKNYTIYAVSITIRIVMGFMLLALIWKFDFSPFMVLIVAILNDGTIMTISKDRVKPSPLPDSWKLKEIFATGVVLGTYLAVMTVVFFWAAESTDFFSAKFGVRSISGNPHELTAAVYLQVSIVSQALIFVTRSRSWSYVERPGFWLISAFFMAQLIATLIAVYANWNFARIRGIGWGWAGVIWLYSIVFYIPLDILKFIIRYSLSGRAWDNVIENKTAFTSKKDYGKGEREAQWAQAQRTLHGLQPAQTSDMFNDKSTYRELSEIADQAKRRAEVARLRERHTLKGHVESVVKQKGLDIEAIQQHYTL.

Topologically, residues 1 to 66 (MAGNKDSSWD…EKKENKVLKF (66 aa)) are cytoplasmic. A helical membrane pass occupies residues 67-86 (LGFMWNPLSWVMELAAIMAI). Residues 87–98 (ALANGGGRPPDW) are Extracellular-facing. The helical transmembrane segment at 99-119 (QDFVGITVLLIINSTISFIEE) threads the bilayer. The Cytoplasmic segment spans residues 120-248 (NNAGNAAAAL…GHFQKVLTAI (129 aa)). Residues 249–269 (GNFCICSIAIGMLIEIVVMYP) traverse the membrane as a helical segment. The Extracellular segment spans residues 270 to 278 (IQKRAYRDG). Residues 279-296 (IDNLLVLLIGGIPIAMPT) form a helical membrane-spanning segment. At 297–648 (VLSVTMAIGS…TSRAIFQRMK (352 aa)) the chain is on the cytoplasmic side. Catalysis depends on Asp334, which acts as the 4-aspartylphosphate intermediate. Positions 593 and 597 each coordinate Mg(2+). The helical transmembrane segment at 649–670 (NYTIYAVSITIRIVMGFMLLAL) threads the bilayer. Residues 671-675 (IWKFD) are Extracellular-facing. A helical transmembrane segment spans residues 676-698 (FSPFMVLIVAILNDGTIMTISKD). Residues 699–714 (RVKPSPLPDSWKLKEI) are Cytoplasmic-facing. A helical membrane pass occupies residues 715–735 (FATGVVLGTYLAVMTVVFFWA). The Extracellular portion of the chain corresponds to 736–756 (AESTDFFSAKFGVRSISGNPH). Residues 757–777 (ELTAAVYLQVSIVSQALIFVT) form a helical membrane-spanning segment. Over 778–789 (RSRSWSYVERPG) the chain is Cytoplasmic. The helical transmembrane segment at 790 to 810 (FWLISAFFMAQLIATLIAVYA) threads the bilayer. Over 811 to 818 (NWNFARIR) the chain is Extracellular. A helical transmembrane segment spans residues 819 to 839 (GIGWGWAGVIWLYSIVFYIPL). Residues 840–954 (DILKFIIRYS…IEAIQQHYTL (115 aa)) are Cytoplasmic-facing. A Phosphothreonine modification is found at Thr886. Ser936 is modified (phosphoserine). An interaction with 14-3-3 proteins region spans residues 952–954 (YTL). The residue at position 953 (Thr953) is a Phosphothreonine.

Belongs to the cation transport ATPase (P-type) (TC 3.A.3) family. Type IIIA subfamily. In terms of assembly, binds to 14-3-3 proteins. The binding is induced by phosphorylation of Thr-953. Binding to 14-3-3 proteins activates the H(+)-ATPase. In terms of tissue distribution, anther specific. Expressed in guard cells.

It localises to the membrane. The enzyme catalyses ATP + H2O + H(+)(in) = ADP + phosphate + 2 H(+)(out). Functionally, the plasma membrane H(+) ATPase of plants and fungi generates a proton gradient that drives the active transport of nutrients by H(+)-symport. The resulting external acidification and/or internal alkinization may mediate growth responses. This chain is ATPase 9, plasma membrane-type (AHA9), found in Arabidopsis thaliana (Mouse-ear cress).